Reading from the N-terminus, the 207-residue chain is Phenazine biosynthesis protein PhzD1 (207 aa).

The Proton donor role is filled by D38. Substrate is bound by residues Q78, R87, K122, and 151–155 (YAHVG).

This sequence belongs to the isochorismatase family. In terms of assembly, homodimer.

It carries out the reaction (2S)-2-amino-4-deoxychorismate + H2O = (5S,6S)-6-amino-5-hydroxycyclohexa-1,3-diene-1-carboxyate + pyruvate. It functions in the pathway antibiotic biosynthesis; phenazine biosynthesis. Involved in the biosynthesis of the antibiotic phenazine, a nitrogen-containing heterocyclic molecule. PhzD1 (operon phzA1B1C1E1F1G1) has a role in the biosynthesis of the phenazine during planktonic growth. Catalyzes the hydrolysis of the vinyl ether functional group of 2-amino-2-deoxyisochorismate (ADIC), yielding pyruvate and trans-2,3-dihydro-3-hydroxyanthranilic acid (DHHA). Also able to act on isochorismate, chorismate and 4-amino-4-deoxychorismate (ADC) as substrates. The sequence is that of Phenazine biosynthesis protein PhzD1 from Pseudomonas aeruginosa (strain ATCC 15692 / DSM 22644 / CIP 104116 / JCM 14847 / LMG 12228 / 1C / PRS 101 / PAO1).